Here is a 238-residue protein sequence, read N- to C-terminus: 3-dehydroquinate dehydratase (238 aa).

Residues 35-37 (ELR) and R70 contribute to the 3-dehydroquinate site. H133 (proton donor/acceptor) is an active-site residue. Residue K160 is the Schiff-base intermediate with substrate of the active site. Residues R202 and Q225 each contribute to the 3-dehydroquinate site.

Belongs to the type-I 3-dehydroquinase family. Homodimer.

The catalysed reaction is 3-dehydroquinate = 3-dehydroshikimate + H2O. The protein operates within metabolic intermediate biosynthesis; chorismate biosynthesis; chorismate from D-erythrose 4-phosphate and phosphoenolpyruvate: step 3/7. Functionally, involved in the third step of the chorismate pathway, which leads to the biosynthesis of aromatic amino acids. Catalyzes the cis-dehydration of 3-dehydroquinate (DHQ) and introduces the first double bond of the aromatic ring to yield 3-dehydroshikimate. This chain is 3-dehydroquinate dehydratase, found in Staphylococcus aureus (strain bovine RF122 / ET3-1).